The chain runs to 95 residues: Acylphosphatase (95 aa).

Residues 8–95 form the Acylphosphatase-like domain; sequence RVSARITGRV…DAFEGFRVRR (88 aa). Residues arginine 23 and asparagine 41 contribute to the active site.

This sequence belongs to the acylphosphatase family.

The catalysed reaction is an acyl phosphate + H2O = a carboxylate + phosphate + H(+). In Salinibacter ruber (strain DSM 13855 / M31), this protein is Acylphosphatase (acyP).